The chain runs to 275 residues: Fructose permease IID component (275 aa).

Positions 5-274 (KRLTKKEIFS…GILGYWAGFL (270 aa)) constitute a PTS EIID domain. The next 5 membrane-spanning stretches (helical) occupy residues 100-120 (MKIGLMGPIAGVGDPIFWGTI), 127-147 (LGASLALGGNIAGPLLFFFLL), 187-207 (ILGLFVMGALVSKWTTINIPI), 227-247 (VLDSIMPGALPLGLTLLVAWM), and 255-275 (LLIICGIFVIGILGYWAGFLA).

It is found in the cell membrane. The phosphoenolpyruvate-dependent sugar phosphotransferase system (PTS), a major carbohydrate active -transport system, catalyzes the phosphorylation of incoming sugar substrates concomitant with their translocation across the cell membrane. This system is involved in fructose transport. This chain is Fructose permease IID component (levG), found in Bacillus subtilis (strain 168).